The following is a 194-amino-acid chain: Troponin I 4 (194 aa).

The segment at 1–27 (MSDVDADEARKMAERERKKEEVRKRLE) is disordered. Basic and acidic residues predominate over residues 7–27 (DEARKMAERERKKEEVRKRLE).

This sequence belongs to the troponin I family. Expression is detected only in pharyngeal muscle cells from embryos to adults.

Functionally, troponin I is the inhibitory subunit of troponin, the thin filament regulatory complex which confers calcium-sensitivity to muscle actomyosin ATPase activity. This is Troponin I 4 (tni-4) from Caenorhabditis elegans.